The following is a 217-amino-acid chain: CASP-like protein UU4 (217 aa).

The segment covering 1-11 has biased composition (basic and acidic residues); that stretch reads MYTGQSDHRPE. The tract at residues 1–21 is disordered; it reads MYTGQSDHRPEGVGVNPGSPN. At 1 to 61 the chain is on the cytoplasmic side; it reads MYTGQSDHRP…VKKNINHMSG (61 aa). Residues 62–82 form a helical membrane-spanning segment; the sequence is LSLGLRVSEFVLSVIAFSLMA. At 83–98 the chain is on the extracellular side; the sequence is SAEQNGAVYSTFTSYS. The chain crosses the membrane as a helical span at residues 99–119; the sequence is FVLAINVLVALYAIGQIILSV. The Cytoplasmic segment spans residues 120 to 141; the sequence is MPLVSGSAPKKLYLFITFGCDQ. Residues 142 to 162 traverse the membrane as a helical segment; the sequence is LSAFLLMAAGAAGASVAMLIN. The Extracellular portion of the chain corresponds to 163 to 187; it reads RKGVIDDYGSGCIDGKITVFCAHAE. A helical transmembrane segment spans residues 188–208; the sequence is ASIAFTFLSFFCVMISSYLGV. The Cytoplasmic portion of the chain corresponds to 209–217; that stretch reads YNLAPYLIL.

This sequence belongs to the Casparian strip membrane proteins (CASP) family. In terms of assembly, homodimer and heterodimers.

Its subcellular location is the cell membrane. This is CASP-like protein UU4 from Physcomitrium patens (Spreading-leaved earth moss).